The primary structure comprises 127 residues: Phosphoribosyl-AMP cyclohydrolase (127 aa).

Aspartate 83 contacts Mg(2+). Cysteine 84 contacts Zn(2+). Mg(2+) contacts are provided by aspartate 85 and aspartate 87. Zn(2+) is bound by residues cysteine 100 and cysteine 107.

It belongs to the PRA-CH family. As to quaternary structure, homodimer. Requires Mg(2+) as cofactor. It depends on Zn(2+) as a cofactor.

The protein resides in the cytoplasm. The enzyme catalyses 1-(5-phospho-beta-D-ribosyl)-5'-AMP + H2O = 1-(5-phospho-beta-D-ribosyl)-5-[(5-phospho-beta-D-ribosylamino)methylideneamino]imidazole-4-carboxamide. The protein operates within amino-acid biosynthesis; L-histidine biosynthesis; L-histidine from 5-phospho-alpha-D-ribose 1-diphosphate: step 3/9. Catalyzes the hydrolysis of the adenine ring of phosphoribosyl-AMP. The polypeptide is Phosphoribosyl-AMP cyclohydrolase (Methanocaldococcus jannaschii (strain ATCC 43067 / DSM 2661 / JAL-1 / JCM 10045 / NBRC 100440) (Methanococcus jannaschii)).